The chain runs to 732 residues: Beta-galactosidase 5 (732 aa).

The first 23 residues, 1–23 (MGTTILVLSKILTFLLTTMLIGS), serve as a signal peptide directing secretion. The active-site Proton donor is E187. E256 acts as the Nucleophile in catalysis. N466 carries N-linked (GlcNAc...) asparagine glycosylation.

It belongs to the glycosyl hydrolase 35 family. As to expression, expressed in leaves and flowers.

It is found in the secreted. The protein localises to the extracellular space. Its subcellular location is the apoplast. The catalysed reaction is Hydrolysis of terminal non-reducing beta-D-galactose residues in beta-D-galactosides.. This is Beta-galactosidase 5 (BGAL5) from Arabidopsis thaliana (Mouse-ear cress).